The primary structure comprises 33 residues: Protamine TP14 (33 aa).

The segment at 1–33 is disordered; the sequence is MPRRRRSSRPPVRRRRRPRVSRRRRRRGGRRRR.

Testis.

Its subcellular location is the nucleus. The protein resides in the chromosome. Its function is as follows. Protamines substitute for histones in the chromatin of sperm during the haploid phase of spermatogenesis. They compact sperm DNA into a highly condensed, stable and inactive complex. The polypeptide is Protamine TP14 (Oncorhynchus mykiss (Rainbow trout)).